The sequence spans 748 residues: MGKKKNSNKSAAAAPAVKHNDRWSSIELGEAKSAAVSHYKEPSKEPKFVHPAKLEKVKRIHDGLNIDRVLSHGPVPKQNGGTKRKHVEVTTQKLENKKPKVEVKKEDEKSKNKKMKNQNKHTALVQNETSTRSTYFVEEPDNENKVTLISNGREIAFKKTEVVESDDEQMIGLDSDEELEDEDETDIDEDEMMIDPKDIERYINFESVEDEEDMEDEEIEDEEFEDEEFEDEEEEADEQEEEEEDVSDEESVVSEMDADSDDEGFIAGKDREAHVISKDKFTRNAPAVDFDKFPFTDEDSVVTSSRAFGFMISPCDVQTFFDKFYQSNVLVVRRKQPTYFGNLFSTARLGELLEKNHLEYGRNINIAQYKNGVRTTLNGQGRAYPQIVKQHLHNMCSVQLVNPQTYDDRIWYLCEVIQEQFGCFVGANTYLTPAGSSGFAPHWDEIDAFLLQVEGRKYWRVWAPESAEEELPLESSDNFTEDDMKGREPVFEGWIEKGDMIYIPRGYIHQARTDSKVHSLHVTVSTGRQWSFANLMEKVVPEAIGVLTDTRHKLRRGLPTGLFDMGGVIDLDYSQEDHFVEKFKMVVDRHMSMLRNLVADQLLESSVDSLAKEFMKQALPPRLTEQEKKLSVLGSSTNLLGDDLVDFTARTKVRLIRRHTQRLLMESEDACFISHRINNSRLFEGRPEQIVEYPISGIDAYRVLSNSYPEWRTLYEIFSLRETKTKSRKENLAAIQLLFQIGVLLVKN.

2 disordered regions span residues N65–Y135 and T160–G264. Residues L94–S110 show a composition bias toward basic and acidic residues. Polar residues predominate over residues L124–T134. The span at V163–M193 shows a compositional bias: acidic residues. The segment covering I194–I203 has biased composition (basic and acidic residues). The span at S207 to G264 shows a compositional bias: acidic residues. The JmjC domain occupies Q399–A543. Fe cation is bound by residues H442, D444, and H509.

This sequence belongs to the ROX family. NO66 subfamily. It depends on Fe(2+) as a cofactor.

The protein localises to the nucleus. The enzyme catalyses N(6),N(6)-dimethyl-L-lysyl(36)-[histone H3] + 2 2-oxoglutarate + 2 O2 = L-lysyl(36)-[histone H3] + 2 formaldehyde + 2 succinate + 2 CO2. In terms of biological role, oxygenase that can act as both a histone lysine demethylase and a ribosomal histidine hydroxylase. Specifically demethylates 'Lys-4' (H3K4me) and 'Lys-36' (H3K36me) of histone H3, thereby playing a central role in histone code. Mediates response to multiple stress stimuli, including heat shock and osmotic, oxidative, and ethanol stress. In Caenorhabditis elegans, this protein is Bifunctional lysine-specific demethylase and histidyl-hydroxylase NO66 (jmjc-1).